Consider the following 388-residue polypeptide: Homeobox protein XHOX-3 (388 aa).

2 disordered regions span residues 30-109 (AVGS…SDFY) and 131-163 (SAGQCSEPMGGSPVNGSDSSKGGGGSHGSFSAC). Polar residues-rich tracts occupy residues 68–81 (ATGQQRSRSPQLRI) and 91–103 (DSLSTKGQHSSSD). The segment at residues 168–227 (MRRYRTAFTREQIARLEKEFYRENYVSRPRRCELAAALNLPETTIKVWFQNRRMKDKRQR) is a DNA-binding region (homeobox).

Belongs to the even-skipped homeobox family.

It localises to the nucleus. Functionally, may be required for posterior development and development of normal embryonic axial pattern. The polypeptide is Homeobox protein XHOX-3 (xhox3) (Xenopus laevis (African clawed frog)).